The primary structure comprises 206 residues: Large ribosomal subunit protein uL4 (206 aa).

Residues 49–73 form a disordered region; sequence KTKTISEISGTTKKPFAQKGGGRAR.

It belongs to the universal ribosomal protein uL4 family. As to quaternary structure, part of the 50S ribosomal subunit.

In terms of biological role, one of the primary rRNA binding proteins, this protein initially binds near the 5'-end of the 23S rRNA. It is important during the early stages of 50S assembly. It makes multiple contacts with different domains of the 23S rRNA in the assembled 50S subunit and ribosome. Its function is as follows. Forms part of the polypeptide exit tunnel. This chain is Large ribosomal subunit protein uL4, found in Paramagnetospirillum magneticum (strain ATCC 700264 / AMB-1) (Magnetospirillum magneticum).